The sequence spans 126 residues: Cystatin-like cysteine protease inhibitor EPIC1 (126 aa).

An N-terminal signal peptide occupies residues 1–21; that stretch reads MTFLRPILALLAATALVTTSA. N-linked (GlcNAc...) asparagine glycosylation is present at N46. The Secondary area of contact motif lies at 69-73; sequence QVVSG.

The protein belongs to the cystatin family. In terms of assembly, interacts with the host papain-like cysteine protease RCR3. Interacts with the host papain-like cysteine protease C14.

Its subcellular location is the secreted. Secreted effector that interacts with and inhibits the pathogenesis-related papain-like cysteine proteases C14 and RCR3 of host plants. Inhibition of host proteases by a pathogen extracellular protease inhibitor forms a specific type of defense-counterdefense mechanism between plants and microbial pathogens. In Phytophthora infestans (Potato late blight agent), this protein is Cystatin-like cysteine protease inhibitor EPIC1.